An 833-amino-acid polypeptide reads, in one-letter code: Translation initiation factor IF-2 (833 aa).

A tr-type G domain is found at 331–501 (TRAPVVTVMG…LLIAEMQDLK (171 aa)). Residues 340–347 (GHVDHGKT) are G1. 340-347 (GHVDHGKT) provides a ligand contact to GTP. The segment at 365–369 (GITQH) is G2. The interval 387–390 (DTPG) is G3. Residues 387–391 (DTPGH) and 441–444 (NKID) each bind GTP. The interval 441–444 (NKID) is G4. Residues 477–479 (SAL) form a G5 region.

This sequence belongs to the TRAFAC class translation factor GTPase superfamily. Classic translation factor GTPase family. IF-2 subfamily.

Its subcellular location is the cytoplasm. Functionally, one of the essential components for the initiation of protein synthesis. Protects formylmethionyl-tRNA from spontaneous hydrolysis and promotes its binding to the 30S ribosomal subunits. Also involved in the hydrolysis of GTP during the formation of the 70S ribosomal complex. The protein is Translation initiation factor IF-2 of Rickettsia canadensis (strain McKiel).